A 104-amino-acid polypeptide reads, in one-letter code: Large ribosomal subunit protein bL21 (104 aa).

It belongs to the bacterial ribosomal protein bL21 family. In terms of assembly, part of the 50S ribosomal subunit. Contacts protein L20.

This protein binds to 23S rRNA in the presence of protein L20. The polypeptide is Large ribosomal subunit protein bL21 (Opitutus terrae (strain DSM 11246 / JCM 15787 / PB90-1)).